Here is a 112-residue protein sequence, read N- to C-terminus: Photosystem II reaction center Psb28 protein (112 aa).

It belongs to the Psb28 family. Part of the photosystem II complex.

It is found in the cellular thylakoid membrane. This chain is Photosystem II reaction center Psb28 protein, found in Microcystis aeruginosa (strain NIES-843 / IAM M-2473).